A 252-amino-acid chain; its full sequence is NDR1/HIN1-like protein 6 (252 aa).

The tract at residues 1 to 46 is disordered; that stretch reads MSQHQKIYPVQDPEAATARPTAPLVPRGSSRSEHGDPSKVPLNQRP. A helical membrane pass occupies residues 70-90; the sequence is FCFLLLLVVAVGASIGILYLV. N-linked (GlcNAc...) asparagine glycosylation is found at N121, N154, N166, and N180.

In terms of assembly, homodimer. As to expression, highly expressed in seeds and at lower level in roots and senescing leaves. Expressed in leaves and flowers.

The protein localises to the cell membrane. It is found in the cytoplasm. The protein resides in the cytosol. Plays an important role in the abiotic stresses-induced abscisic acid (ABA) signaling and biosynthesis. Acts as a positive regulator of ABA-mediated seed germination inhibition. Functions downstream of ABF2/AREB1, ABF4/AREB2 and ABF3. The chain is NDR1/HIN1-like protein 6 from Arabidopsis thaliana (Mouse-ear cress).